A 541-amino-acid chain; its full sequence is Calcium-dependent protein kinase 26 (541 aa).

Gly residues predominate over residues 1-11 (MGQCCTGGGKA). A disordered region spans residues 1-74 (MGQCCTGGGK…AGPIGEVLER (74 aa)). Gly2 is lipidated: N-myristoyl glycine. The span at 38-67 (AKQQPCSPAAKAAATEAAAAASSSKKPAGP) shows a compositional bias: low complexity. In terms of domain architecture, Protein kinase spans 83-341 (YSIGKELGRG…AFQVLNHPWI (259 aa)). ATP-binding positions include 89-97 (LGRGQFGVT) and Lys112. The active-site Proton acceptor is the Asp207. The tract at residues 347–377 (APDVPLDNVVLNRLKQFRAMNQFKKAALRII) is autoinhibitory domain. EF-hand domains follow at residues 384-419 (EEIK…QGTK), 420-455 (FSDN…MNKM), 456-491 (DREE…QGLY), and 493-526 (ANEI…GSGC). 19 residues coordinate Ca(2+): Asp397, Asp399, Ser401, Thr403, Glu408, Asp433, Asp435, Asn437, Glu444, Asp469, Asp471, Ser473, Tyr475, Glu480, Asp504, Asn506, Asp508, Arg510, and Glu515.

The protein belongs to the protein kinase superfamily. Ser/Thr protein kinase family. CDPK subfamily. Specifically expressed in heading panicles, spikelets and mature pollen grains. Not expressed in vegetative tissues.

It is found in the membrane. It catalyses the reaction L-seryl-[protein] + ATP = O-phospho-L-seryl-[protein] + ADP + H(+). It carries out the reaction L-threonyl-[protein] + ATP = O-phospho-L-threonyl-[protein] + ADP + H(+). Its activity is regulated as follows. Activated by calcium. Autophosphorylation may play an important role in the regulation of the kinase activity. Its function is as follows. May play a role in signal transduction pathways that involve calcium as a second messenger. The protein is Calcium-dependent protein kinase 26 of Oryza sativa subsp. japonica (Rice).